We begin with the raw amino-acid sequence, 1202 residues long: Metabotropic glycine receptor (1202 aa).

Positions 1–24 (MGAMAYSLLLCLLLAHLGLGEVGA) are cleaved as a signal peptide. Positions 25 to 62 (SLDPSERPDSSRERTSRGKQHGQQLPRASAPDPSIPWS) are disordered. Topologically, residues 25–417 (SLDPSERPDS…CFVQEDKYLR (393 aa)) are extracellular. The segment covering 28–40 (PSERPDSSRERTS) has biased composition (basic and acidic residues). The tract at residues 85–281 (YLYTGDFHQL…CENGSYKPGW (197 aa)) is cache-like region. N-linked (GlcNAc...) asparagine glycosylation is found at Asn-98 and Asn-143. The cysteines at positions 99 and 272 are disulfide-linked. Glycine contacts are provided by Ser-172 and Arg-173. Asn-215 carries N-linked (GlcNAc...) asparagine glycosylation. The tract at residues 234–253 (LHRRGSNQGPRGLGHSWRRR) is disordered. Position 271 (Glu-271) interacts with glycine. An N-linked (GlcNAc...) asparagine glycan is attached at Asn-274. Position 307 (Asp-307) interacts with glycine. The N-linked (GlcNAc...) asparagine glycan is linked to Asn-333. The helical transmembrane segment at 418–439 (LAIISFQALCMLLDFVSMLVVY) threads the bilayer. The Cytoplasmic portion of the chain corresponds to 440–451 (HFRKAKSIRASG). Residues 452–474 (LILLETILFGSLLLYFPVVILYF) form a helical membrane-spanning segment. Topologically, residues 475 to 478 (EPST) are extracellular. A helical transmembrane segment spans residues 479 to 501 (FRCILLRWVRLLGFATVYGTVTL). A disulfide bridge connects residues Cys-481 and Cys-573. At 502-525 (KLHRVLKVFLSRTAQRIPYMTGGR) the chain is on the cytoplasmic side. Residues 526–547 (VMRMLAVIVLVVFWFLVGWTSS) traverse the membrane as a helical segment. The Extracellular portion of the chain corresponds to 548 to 576 (MCQNLERDILLVGQGQTSDNLTFNMCLID). Residues 577 to 597 (RWDYMTAVAEFLFLLWGIYLC) form a helical membrane-spanning segment. Topologically, residues 598–611 (YAVRTVPSAFHEPR) are cytoplasmic. A helical membrane pass occupies residues 612-633 (YMAVAVHNELIITAIFHTIRFV). Residues 634 to 642 (LASRLQPDW) lie on the Extracellular side of the membrane. A helical membrane pass occupies residues 643-664 (MLMLYFAHTHLTVTVTIGLLLI). At 665–1202 (PKFSHSSNNP…SASKIPGPRK (538 aa)) the chain is on the cytoplasmic side. Phosphoserine is present on residues Ser-694, Ser-705, and Ser-708. Disordered stretches follow at residues 757 to 899 (RITE…TSML) and 914 to 995 (LGLA…QIKD). Basic and acidic residues-rich tracts occupy residues 769–781 (CSKE…DHSA) and 819–828 (STYDHVRDQT). Lys-774 is covalently cross-linked (Glycyl lysine isopeptide (Lys-Gly) (interchain with G-Cter in ubiquitin)). The segment covering 845-856 (ENSTLESLSSKK) has biased composition (low complexity). Ser-865 carries the phosphoserine modification. The segment covering 925-943 (MEDRAKSQKPQPKDRETNR) has biased composition (basic and acidic residues). Polar residues-rich tracts occupy residues 944 to 958 (KYSN…PNSN) and 975 to 994 (QRVN…TQIK). Position 946 is a phosphoserine (Ser-946). A VCPWE motif 1 motif is present at residues 1002–1006 (VCPWE). The residue at position 1061 (Ser-1061) is a Phosphoserine. Positions 1067-1071 (VCPWE) match the VCPWE motif 2 motif. At Ser-1076 the chain carries Phosphoserine. Composition is skewed to polar residues over residues 1132–1144 (QMGD…SSSV) and 1151–1162 (CISSNNSPQPLT). The segment at 1132–1162 (QMGDQEKQTSSSVDIIPGSCISSNNSPQPLT) is disordered. The VCPWE motif 3 signature appears at 1167–1171 (VCPWE).

It belongs to the G-protein coupled receptor 3 family. In terms of assembly, homodimer. Associates with the RGS7-GNB5 complex, promoting its localization to the cell membrane and regulating its GTPase activator activity. Interacts (via VCPWE motifs) with GNAO1. Interacts with GPC4. Interacts with EGFLAM.

It is found in the cell membrane. The protein localises to the postsynaptic cell membrane. The protein resides in the presynaptic cell membrane. Its subcellular location is the nucleus. Its function is as follows. Metabotropic receptor for glycine that controls synapse formation and function in the brain. Acts as an atypical G-protein coupled receptor that recruits and regulates the RGS7-GNB5 complex instead of activating G proteins. In absence of glycine ligand, promotes the GTPase activator activity of RGS7, increasing the GTPase activity of G protein alpha subunits, thereby driving them into their inactive GDP-bound form. Glycine-binding changes the conformation of the intracellular surface, inhibiting the GTPase activator activity of the RGS7-GNB5 complex, promoting G protein alpha subunits into their active GTP-bound form and regulating cAMP levels. Also able to bind taurine, a compound closely related to glycine, but with a two-fold lower affinity. Glycine receptor-dependent regulation of cAMP controls key ion channels, kinases and neurotrophic factors involved in neuronal excitability and synaptic transmission. Plays a pivotal role in regulating mood and cognition via its ability to regulate neuronal excitability in L2/L3 pyramidal neurons of the prefrontal cortex. Also involved in spatial learning by regulating hippocampal CA1 neuronal excitability. Acts as a synaptic organizer in the hippocampus, required for proper mossy fiber-CA3 neurocircuitry establishment, structure and function: induces presynaptic differentiation in contacting axons via its interaction with GPC4. In addition to glycine, may also act as a receptor for osteocalcin (BGLAP) hormone: osteocalcin-binding initiates a signaling response that prevents neuronal apoptosis in the hippocampus and regulates the synthesis of neurotransmitters. The polypeptide is Metabotropic glycine receptor (Rattus norvegicus (Rat)).